The sequence spans 384 residues: Formate-dependent phosphoribosylglycinamide formyltransferase (384 aa).

N(1)-(5-phospho-beta-D-ribosyl)glycinamide is bound by residues 14-15 (EL) and Glu-74. Residues Arg-106, Lys-147, 152–157 (SSGKGQ), 187–190 (EEFI), and Glu-195 contribute to the ATP site. Residues 111–300 (RLAAETLGLA…EFALHVRAIL (190 aa)) form the ATP-grasp domain. Mg(2+) contacts are provided by Glu-259 and Glu-271. N(1)-(5-phospho-beta-D-ribosyl)glycinamide contacts are provided by residues Asp-278, Lys-348, and 355 to 356 (RR).

The protein belongs to the PurK/PurT family. As to quaternary structure, homodimer.

It catalyses the reaction N(1)-(5-phospho-beta-D-ribosyl)glycinamide + formate + ATP = N(2)-formyl-N(1)-(5-phospho-beta-D-ribosyl)glycinamide + ADP + phosphate + H(+). The protein operates within purine metabolism; IMP biosynthesis via de novo pathway; N(2)-formyl-N(1)-(5-phospho-D-ribosyl)glycinamide from N(1)-(5-phospho-D-ribosyl)glycinamide (formate route): step 1/1. In terms of biological role, catalyzes two reactions: the first one is the production of beta-formyl glycinamide ribonucleotide (GAR) from formate, ATP and beta GAR; the second, a side reaction, is the production of acetyl phosphate and ADP from acetate and ATP. Functionally, involved in the de novo purine biosynthesis. Catalyzes the transfer of formate to 5-phospho-ribosyl-glycinamide (GAR), producing 5-phospho-ribosyl-N-formylglycinamide (FGAR). Formate is provided by PurU via hydrolysis of 10-formyl-tetrahydrofolate. The sequence is that of Formate-dependent phosphoribosylglycinamide formyltransferase from Bacillus subtilis (strain 168).